The chain runs to 210 residues: MNNLLSKFKDFVGLNEPVEYEYDYDEMEGEQYVYPQQQQTPAAVPTQEESRSNRRLRNRASATTATTASTTGINGVVQQESGMGSVMNNVIGMPGALNGMSEVVVLEPRTFEEMPQAIRALRERKSVVLNLTIMDPEQAQRAVDFVAGGTYALDGHQERIGESIFLFTPSCVQVRTQTGLVNEMSQTQPRPRVPNSGSQVWQPEQIQMIQ.

Composition is skewed to low complexity over residues 36 to 47 and 59 to 69; these read QQQQTPAAVPTQ and RASATTATTAS. Disordered regions lie at residues 36-69 and 182-210; these read QQQQ…TTAS and NEMS…QMIQ.

This sequence belongs to the SepF family. In terms of assembly, homodimer. Interacts with FtsZ.

It localises to the cytoplasm. Cell division protein that is part of the divisome complex and is recruited early to the Z-ring. Probably stimulates Z-ring formation, perhaps through the cross-linking of FtsZ protofilaments. Its function overlaps with FtsA. This Trichodesmium erythraeum (strain IMS101) protein is Cell division protein SepF.